Here is a 631-residue protein sequence, read N- to C-terminus: DNA mismatch repair protein MutL (631 aa).

Belongs to the DNA mismatch repair MutL/HexB family.

Functionally, this protein is involved in the repair of mismatches in DNA. It is required for dam-dependent methyl-directed DNA mismatch repair. May act as a 'molecular matchmaker', a protein that promotes the formation of a stable complex between two or more DNA-binding proteins in an ATP-dependent manner without itself being part of a final effector complex. The sequence is that of DNA mismatch repair protein MutL from Lactobacillus acidophilus (strain ATCC 700396 / NCK56 / N2 / NCFM).